Here is a 151-residue protein sequence, read N- to C-terminus: RNA polymerase-binding transcription factor DksA (151 aa).

4 residues coordinate Zn(2+): Cys114, Cys117, Cys135, and Cys138. A dksA C4-type zinc finger spans residues 114–138 (CNSCAVEIGIRRLEARPTANLCIDC).

This sequence belongs to the DksA family. Interacts directly with the RNA polymerase.

Its subcellular location is the cytoplasm. In terms of biological role, transcription factor that acts by binding directly to the RNA polymerase (RNAP). Required for negative regulation of rRNA expression and positive regulation of several amino acid biosynthesis promoters. Also required for regulation of fis expression. The protein is RNA polymerase-binding transcription factor DksA of Buchnera aphidicola subsp. Schizaphis graminum (strain Sg).